We begin with the raw amino-acid sequence, 660 residues long: tRNA 5-methylaminomethyl-2-thiouridine biosynthesis bifunctional protein MnmC (660 aa).

Residues 1–235 (MTITRHARID…KWEVLRGAFI (235 aa)) form a tRNA (mnm(5)s(2)U34)-methyltransferase region. An FAD-dependent cmnm(5)s(2)U34 oxidoreductase region spans residues 266-660 (IGAGLAGCAT…LRGLIRGGGK (395 aa)).

In the N-terminal section; belongs to the methyltransferase superfamily. tRNA (mnm(5)s(2)U34)-methyltransferase family. It in the C-terminal section; belongs to the DAO family. FAD is required as a cofactor.

The protein localises to the cytoplasm. It catalyses the reaction 5-aminomethyl-2-thiouridine(34) in tRNA + S-adenosyl-L-methionine = 5-methylaminomethyl-2-thiouridine(34) in tRNA + S-adenosyl-L-homocysteine + H(+). Catalyzes the last two steps in the biosynthesis of 5-methylaminomethyl-2-thiouridine (mnm(5)s(2)U) at the wobble position (U34) in tRNA. Catalyzes the FAD-dependent demodification of cmnm(5)s(2)U34 to nm(5)s(2)U34, followed by the transfer of a methyl group from S-adenosyl-L-methionine to nm(5)s(2)U34, to form mnm(5)s(2)U34. This chain is tRNA 5-methylaminomethyl-2-thiouridine biosynthesis bifunctional protein MnmC, found in Pseudomonas syringae pv. tomato (strain ATCC BAA-871 / DC3000).